We begin with the raw amino-acid sequence, 564 residues long: MAPKDIMTNSHAKSILNTMNSLRKSQTLCDVTLRVNLKDFPAHRIVLAACSDYFCAMFTNELSEKGKPYVDIQGLTSSTMEILLDFVYTETVHVTVENVQELLPAACLLQLKGVKQACCDFLESQLDPSNCLGIRDFAETHNCLELMQAAEVYSQKHFPEVVQHEEFMLLHQEEVEKLIHCDEIQINSEEPVFEAVINWVKHNRHEREKSLPQLLQYVRMPLLTPRYITDVIDAEPLIRCSLQCRDLVDEAKKFHLRPELRSQMQGPRTRVRLGANEVLLVIGGFGSQQSPIDIVEKYDPKTQEWSVLPSITRKRRYVATVSLGDRVYVIGGYDGRSRLSSVECLDYTSEEDGVWYSVAPMNVRRGLAGATTLGDMIYVSGGFDGSRRHTSMERYDPNIDQWSMLGDMQTAREGAGLVVANGVIYCLGGYDGLNILSSVERYDPHTGHWSHVTPMATKRSGAGVSLLNDHIYVVGGFDGTAHLSSVEAYNIRTDSWTTMTSMTTPRCYVGATVLRGRLYAIAGYDGNSLLNSVECYDPLIDSWAVVTSMATQRCDAGVCVLREK.

Positions 29 to 96 (CDVTLRVNLK…VYTETVHVTV (68 aa)) constitute a BTB domain. Residues 131 to 232 (CLGIRDFAET…LTPRYITDVI (102 aa)) enclose the BACK domain. 6 Kelch repeats span residues 278–325 (VLLV…SLGD), 327–375 (VYVI…TLGD), 376–422 (MIYV…VANG), 423–469 (VIYC…LLND), 471–516 (IYVV…VLRG), and 518–563 (LYAI…VLRE).

In terms of assembly, component of the BCR(KLHL12) E3 ubiquitin ligase complex.

Its subcellular location is the cytoplasmic vesicle. The protein resides in the COPII-coated vesicle. The protein operates within protein modification; protein ubiquitination. In terms of biological role, substrate-specific adapter of a BCR (BTB-CUL3-RBX1) E3 ubiquitin ligase complex that acts as a negative regulator of Wnt signaling pathway and ER-Golgi transport. The BCR(KLHL12) complex is involved in ER-Golgi transport by regulating the size of COPII coats, thereby playing a key role in collagen export, which is required for embryonic stem (ES) cells division. This chain is Kelch-like protein 12 (klhl12), found in Xenopus laevis (African clawed frog).